Here is a 478-residue protein sequence, read N- to C-terminus: MPVLYEQDKHVSSAILTGQERGVLRCQERTSLLHHWKLTKEQIALVEKAGFGWFRLVGSISLNNSLISALVERWRRETNTFHFPCGEMTITLDEVSLILGLAVDGKPVVGVKEKDEDPSQVCLRLLGKLPKGELSGNRVTAKWLKESFAECPKGATMKEIEYHTRAYLIYIVGSTIFATTDPSKISVDYLILFEDFEKAGEYAWGAAALAFLYRQIGNASQRSQSIIGGCLTLLQCWSYFHLNIDRPKRTTRQFPLALLWKGRQQSRSKNDLFKYRKALDDLDPSNVSWCPFEGDLDIVPQSFKDNLLLGRSRTKLIGPKVVEWHFPDRCMKQFGLCQVIPGEVPPRKNEKNHDEDLLEDMNTADEEWMRRRENIVENGGGNGDESEYMQWFNSITVPKLHRDTSLEADIMNVQAAILQFDEVASTLSLEDLHPEEREAIEEAVMSMSNALRVGDWYEASTTNKRKRREEQQQTDWSE.

Residues 459–478 are disordered; the sequence is ASTTNKRKRREEQQQTDWSE. The Nuclear localization signal motif lies at 464–468; it reads KRKRR.

In terms of tissue distribution, expressed in root meristem, root vasculature, shoot apical meristem (SAM), leaf vasculature and ovules.

It localises to the nucleus. Required for the organization of the root apical meristem (RAM) and the shoot apical meristem (SAM). Required to maintain genome stability and cell division activity in meristematic cells. This is Protein MAINTENANCE OF MERISTEMS from Arabidopsis thaliana (Mouse-ear cress).